A 1001-amino-acid chain; its full sequence is Sarcoplasmic/endoplasmic reticulum calcium ATPase 1 (1001 aa).

At 1–48 (MEAAHSKSTEECLAYFGVSETTGLTPDQVKRHLEKYGHNELPAEEGKS) the chain is on the cytoplasmic side. The chain crosses the membrane as a helical span at residues 49 to 69 (LWELVIEQFEDLLVRILLLAA). Topologically, residues 70–89 (CISFVLAWFEEGEETITAFV) are lumenal. A helical transmembrane segment spans residues 90–110 (EPFVILLILIANAIVGVWQER). The Cytoplasmic portion of the chain corresponds to 111-253 (NAENAIEALK…QDKTPLQQKL (143 aa)). The chain crosses the membrane as a helical span at residues 254-273 (DEFGEQLSKVISLICVAVWL). Residues 274 to 295 (INIGHFNDPVHGGSWIRGAIYY) lie on the Lumenal side of the membrane. Residues 296 to 313 (FKIAVALAVAAIPEGLPA) traverse the membrane as a helical segment. 4 residues coordinate Ca(2+): valine 304, alanine 305, isoleucine 307, and glutamate 309. The Cytoplasmic portion of the chain corresponds to 314-757 (VITTCLALGT…EEGRAIYNNM (444 aa)). The 4-aspartylphosphate intermediate role is filled by aspartate 351. Mg(2+)-binding residues include aspartate 351 and threonine 353. ATP is bound at residue threonine 353. Position 441 is a phosphothreonine (threonine 441). 4 residues coordinate ATP: glutamate 442, arginine 489, lysine 515, and arginine 560. Residue threonine 569 is modified to Phosphothreonine. Position 581 is a phosphoserine (serine 581). ATP-binding residues include threonine 625, glycine 626, aspartate 627, arginine 678, and lysine 684. Position 703 (aspartate 703) interacts with Mg(2+). Position 706 (asparagine 706) interacts with ATP. The chain crosses the membrane as a helical span at residues 758–777 (KQFIRYLISSNVGEVVCIFL). Residues asparagine 768 and glutamate 771 each coordinate Ca(2+). The Lumenal portion of the chain corresponds to 778–787 (TAALGLPEAL). A helical transmembrane segment spans residues 788-808 (IPVQLLWVNLVTDGLPATALG). The segment at 788-808 (IPVQLLWVNLVTDGLPATALG) is interaction with PLN. 3 residues coordinate Ca(2+): asparagine 796, threonine 799, and aspartate 800. Residues 809 to 828 (FNPPDLDIMDRPPRSPKEPL) are Cytoplasmic-facing. A helical transmembrane segment spans residues 829–851 (ISGWLFFRYMAIGGYVGAATVGA). Residues 852-897 (AAWWFMYAEDGPGVTYHQLTHFMQCTEDHPHFEGLDCEIFEAPEPM) are Lumenal-facing. Cysteine 876 and cysteine 888 are disulfide-bonded. A helical transmembrane segment spans residues 898–917 (TMALSVLVTIEMCNALNSLS). A Ca(2+)-binding site is contributed by glutamate 908. At 918 to 930 (ENQSLMRMPPWVN) the chain is on the cytoplasmic side. Residues 931-949 (IWLLGSICLSMSLHFLILY) form a helical membrane-spanning segment. The interaction with PLN stretch occupies residues 932-943 (WLLGSICLSMSL). Over 950–964 (VDPLPMIFKLKALDL) the chain is Lumenal. The helical transmembrane segment at 965–985 (TQWLMVLKISLPVIGLDEILK) threads the bilayer. The Cytoplasmic segment spans residues 986-1001 (FIARNYLEDPEDERRK).

The protein belongs to the cation transport ATPase (P-type) (TC 3.A.3) family. Type IIA subfamily. In terms of assembly, interacts with sarcolipin (SLN). Interacts with phospholamban (PLN). Interacts with myoregulin (MRLN). Interacts with DWORF. Interacts with VMP1. Requires Mg(2+) as cofactor. As to expression, skeletal muscle (at protein level). Skeletal muscle, fast twitch muscle (type II) fibers.

The protein resides in the endoplasmic reticulum membrane. It localises to the sarcoplasmic reticulum membrane. The catalysed reaction is Ca(2+)(in) + ATP + H2O = Ca(2+)(out) + ADP + phosphate + H(+). With respect to regulation, inhibited by sarcolipin (SLN) and myoregulin (MRLN). Has also been shown to be reversibly inhibited by phospholamban (PLN) at low calcium concentrations in vitro. Dephosphorylated PLN decreases the apparent affinity of the ATPase for calcium and this inhibition is regulated by the phosphorylation of PLN in vitro. Enhanced by DWORF; DWORF increases activity by displacing sarcolipin (SLN), phospholamban (PLN) and myoregulin (MRLN). Its function is as follows. Key regulator of striated muscle performance by acting as the major Ca(2+) ATPase responsible for the reuptake of cytosolic Ca(2+) into the sarcoplasmic reticulum. Catalyzes the hydrolysis of ATP coupled with the translocation of calcium from the cytosol to the sarcoplasmic reticulum lumen. Contributes to calcium sequestration involved in muscular excitation/contraction. The polypeptide is Sarcoplasmic/endoplasmic reticulum calcium ATPase 1 (ATP2A1) (Oryctolagus cuniculus (Rabbit)).